Consider the following 138-residue polypeptide: Large ribosomal subunit protein bL19 (138 aa).

Belongs to the bacterial ribosomal protein bL19 family.

This protein is located at the 30S-50S ribosomal subunit interface and may play a role in the structure and function of the aminoacyl-tRNA binding site. This chain is Large ribosomal subunit protein bL19, found in Rickettsia conorii (strain ATCC VR-613 / Malish 7).